The chain runs to 1142 residues: MSGPAQVPMMSPNGSVPPIYVPPGYAPQVIEDNGVRRVVVVPQAPEFHPGGHTVLHRSPHPPLPGFIPVPTMMPPPPRHMYSPVTGAGDMTTQYMPQYQSSQVYGDVDAHSTHGRSNFRDERSSKTYERLQKKLKDRQGTQKDKMSSPPSSPQKCPSPINEHNGLIKGQNAGGINTGSAKIKSGKGKGGTQVDTEIEEKDEETKAFEALLSNIVKPVASDIQARTVVLTWSPPSSLINGETDESSVPELYGYEVLISSTGKDGKYKSVYIGEETNITLNDLKPATDYHAKVQAEYNSIKGTPSEAEIFTTLSCEPDIPNPPRIANRTKNSLTLQWKAPSDNGSKIQNFVLEWDEGKGNGEFYQCYMGSQKQFKITKLSPAMGCKFRLSARNDYGTSGFSEEVLYYTSGCAPSMPASPVLTKAGITWLSLQWSKPSGTPSDEGISYILEMEEETSGYGFKPKYDGEDLAYTVKNLRRSTKYKFKVIAYNSEGKSNPSEVVEFTTCPDKPGIPVKPSVKGKIHSHSFKITWDPPKDNGGAAINKYVVEMAEGSNGNKWEMIYSGATREHLCDRLNPGCFYRLRVYCISDGGQSAVSESLLVQTPAVPPGPCLPPRLQGRPKAKEIQLRWGPPLVDGGSPISCYSVEMSPIEKDEPREVYQGSEVECTVSSLLPGKTYSFRLRAANKMGFGPFSEKCDITTAPGPPDQCKPPQVTCRSATCAQVNWEVPLSNGTDVTEYRLEWGGVEGSMQICYCGPGLNYEIKGLSPATTYYCRVQALSVVGAGPFSEVVACVTPPSVPGIVTCLQEISDDEIENPHYSPSTCLAISWEKPCDHGSEILAYSIDSGDKQSLTVGKVTSYIINNLQPDTTYRIRIQALNSLGAGPFSHVIKLKTKPLPPDPPRLECVAFSHQNLKLKWGEGTPKTLSTDSIQYHLQMEDKNGRFVSLYRGPCHTYKVQRLNESTSYKFCIQACNEAGEGPVSQEYIFTTPKSVPAALKAPKIEKVNDHICEITWECLQPMKGDPVIYSLQVMLGKDSEFKQIYKGPDSSFRYSSLQLNCEYRFRVCAIRQCQDSLGHQDLVGPYSTTVLFISQRTEPPASTNRDTVESTRTRRALSDEQCAAVNLVLFAFFSILIAFIIQYFVIK.

A disordered region spans residues 104–191 (YGDVDAHSTH…KSGKGKGGTQ (88 aa)). Residues 107–145 (VDAHSTHGRSNFRDERSSKTYERLQKKLKDRQGTQKDKM) show a composition bias toward basic and acidic residues. Low complexity predominate over residues 146–158 (SSPPSSPQKCPSP). 3 positions are modified to phosphoserine: Ser147, Ser151, and Ser157. Fibronectin type-III domains are found at residues 212-313 (NIVK…TLSC), 317-409 (IPNP…TSGC), 413-506 (MPAS…TCPD), 510-604 (IPVK…TPAV), 608-701 (PCLP…TAPG), 705-795 (QCKP…TPPS), 805-894 (EISD…TKPL), 895-989 (PPDP…TPKS), and 990-1095 (VPAA…TEPP). Lys328 carries the N6-acetyllysine modification. Residues 1121–1141 (NLVLFAFFSILIAFIIQYFVI) traverse the membrane as a helical segment.

Belongs to the FNDC3 family.

The protein localises to the golgi apparatus membrane. Functionally, mediates spermatid-Sertoli adhesion during spermatogenesis. In Pongo abelii (Sumatran orangutan), this protein is Fibronectin type-III domain-containing protein 3A (FNDC3A).